We begin with the raw amino-acid sequence, 366 residues long: MADLKKTPLYGEHVAAGAKMVEFGGWLMPVQYSSIIEEHQRVRNCAGLFDVSHMGEITIKGPDALALVQKLLTNDADRATGDRVIYSPMCYPDGGVVDDLLVYPRGEGEYLLVVNAGNIDKDFAWIQENASGFRVEVSNISAATAQLALQGPRALEILRPLTRVDLASLGYYRWTEGQVLGVHCLISRTGYTGEDGFELYFEAAAAPTMWRNILAAGREAGLVPAGLGARDTLRLEAALPLYGHELGPDISPLEAGLHRFVRLEKGEFNGREALAAQREAGVRRQLVGLTMIDRGIPRPEYPVLAAGKEIGYVTSGSLAPTLGQNIALALVAAGTVSTGGEVEVSIRGRVNRARVVKLPFYRRPKK.

Belongs to the GcvT family. The glycine cleavage system is composed of four proteins: P, T, L and H.

It catalyses the reaction N(6)-[(R)-S(8)-aminomethyldihydrolipoyl]-L-lysyl-[protein] + (6S)-5,6,7,8-tetrahydrofolate = N(6)-[(R)-dihydrolipoyl]-L-lysyl-[protein] + (6R)-5,10-methylene-5,6,7,8-tetrahydrofolate + NH4(+). The glycine cleavage system catalyzes the degradation of glycine. The polypeptide is Aminomethyltransferase (Moorella thermoacetica (strain ATCC 39073 / JCM 9320)).